Reading from the N-terminus, the 313-residue chain is Protein sprouty homolog 1 (313 aa).

N-acetylmethionine is present on M1. The segment at 43–152 is disordered; the sequence is QIKAIRGSNE…RSDRVIRTQP (110 aa). A compositionally biased stretch (basic and acidic residues) spans 69-79; the sequence is PRPEKQERTHE. Low complexity predominate over residues 106-125; sequence SRSTSTGSAASSGSSSSVSS. The region spanning 177 to 289 is the SPR domain; it reads QCGKCKCGEC…CYDWTHRPGC (113 aa).

This sequence belongs to the sprouty family. In terms of assembly, forms heterodimers with SPRY2. Interacts with TESK1. Interacts with CAV1 (via C-terminus).

The protein localises to the cytoplasm. It localises to the membrane. Its function is as follows. Inhibits fibroblast growth factor (FGF)-induced retinal lens fiber differentiation, probably by inhibiting FGF-mediated phosphorylation of ERK1/2. Inhibits TGFB-induced epithelial-to-mesenchymal transition in lens epithelial cells. This chain is Protein sprouty homolog 1 (Spry1), found in Mus musculus (Mouse).